The following is a 245-amino-acid chain: 5'-nucleotidase SurE (245 aa).

A divalent metal cation-binding residues include aspartate 8, aspartate 9, serine 39, and asparagine 91.

The protein belongs to the SurE nucleotidase family. A divalent metal cation is required as a cofactor.

Its subcellular location is the cytoplasm. The catalysed reaction is a ribonucleoside 5'-phosphate + H2O = a ribonucleoside + phosphate. Functionally, nucleotidase that shows phosphatase activity on nucleoside 5'-monophosphates. In Herminiimonas arsenicoxydans, this protein is 5'-nucleotidase SurE.